A 451-amino-acid polypeptide reads, in one-letter code: Tubulin gamma-2 chain (451 aa).

A Phosphoserine; by BRSK1 modification is found at serine 131. Position 142–148 (142–148 (AGGTGSG)) interacts with GTP.

This sequence belongs to the tubulin family. Component of the gamma-tubulin ring complex (gTuRC) consisting of TUBGCP2, TUBGCP3, TUBGCP4, TUBGCP5 and TUBGCP6 and gamma-tubulin TUBG1 or TUBG2. TUBGCP2, TUBGCP3, TUBGCP4, TUBGCP5 and TUBGCP6 assemble in a 5:5:2:1:1 stoichiometry; each is associated with a gamma-tubulin, thereby arranging 14 gamma-tubulins in a helical manner. Gamma-tubulin at the first position is blocked by TUBGCP3 at the last position, allowing 13 protafilaments to grow into a microtubule. Interacts with alpha-beta tubulin heterodimers; the interaction allows microtubules to nucleate from the gTuRC. In terms of processing, phosphorylation at Ser-131 by BRSK1 regulates centrosome duplication, possibly by mediating relocation of gamma-tubulin and its associated proteins from the cytoplasm to the centrosome.

The protein resides in the cytoplasm. It is found in the cytoskeleton. The protein localises to the microtubule organizing center. Its subcellular location is the centrosome. Its function is as follows. Tubulin is the major constituent of microtubules, protein filaments consisting of alpha- and beta-tubulin heterodimers. Gamma-tubulin is a key component of the gamma-tubulin ring complex (gTuRC) which mediates microtubule nucleation. The gTuRC regulates the minus-end nucleation of alpha-beta tubulin heterodimers that grow into microtubule protafilaments, a critical step in centrosome duplication and spindle formation. This Homo sapiens (Human) protein is Tubulin gamma-2 chain (TUBG2).